Reading from the N-terminus, the 471-residue chain is MTELPDSTRWQLWIVAFGFFMQSLDTTIVNTALPSMALSLGESPLHMHMVVVSYVLTVAVMLPASGWLADKVGVRNIFFTAIVLFTLGSLFCAWSSTLNELVLARVLQGVGGAMMVPVGRLTVMKIVPREQYMAAMTFVTLPGQVGPLLGPALGGILVEYASWHWIFLINIPVGIVGAIATLMLMPNYTMQTRRFDLSGFLLLAVGMAVLTMALDGSKGTGLSPLSLGALVLCGILAIALYLKHAKNNPRALFSLALFRTHTFSLGLSGSFAGRVGSGMLPFMTPVFLQIGLGFSPFHAGLMMIPMVLGSMGMKRIVVQVVNRFGYRRVLVATTLGLSLVSLLFMSVAMLGWYYALPFVLFLQGMVNSTRFSSMNTLTLKDLPDELASSGNSLLSMIMQLSMSIGVTIAGLLLGMFGQQHIAADSGASHTVFMYTWLCMALIIALPALIFARVPNDTHKNAVISRRKRSTQ.

Helical transmembrane passes span leucine 12–alanine 32, methionine 49–alanine 69, isoleucine 77–threonine 97, valine 102–methionine 124, phenylalanine 138–valine 158, tryptophan 165–methionine 185, leucine 197–serine 217, leucine 222–leucine 242, phenylalanine 263–methionine 283, valine 286–methionine 306, leucine 342–leucine 362, methionine 396–phenylalanine 416, and valine 431–alanine 451.

The protein belongs to the major facilitator superfamily. TCR/Tet family.

It is found in the cell inner membrane. This is Putative multidrug resistance protein MdtD from Citrobacter koseri (strain ATCC BAA-895 / CDC 4225-83 / SGSC4696).